A 217-amino-acid polypeptide reads, in one-letter code: Small ribosomal subunit protein uS3 (217 aa).

The KH type-2 domain maps to 40 to 110; that stretch reads IRDLINKGFN…EVYINIHEVR (71 aa).

This sequence belongs to the universal ribosomal protein uS3 family. As to quaternary structure, part of the 30S ribosomal subunit. Forms a tight complex with proteins S10 and S14.

Its function is as follows. Binds the lower part of the 30S subunit head. Binds mRNA in the 70S ribosome, positioning it for translation. This Rickettsia akari (strain Hartford) protein is Small ribosomal subunit protein uS3.